The sequence spans 415 residues: Coiled-coil domain-containing glutamate-rich protein 1 (415 aa).

Residues 1–11 (MTQTLDTKEDP) are compositionally biased toward basic and acidic residues. 5 disordered regions span residues 1–20 (MTQTLDTKEDPLNLGGGWAS), 29–64 (FGPRRRRGAPVYRRRPRYGPKAEYEPPRKQAKQQYG), 133–162 (RPPGRKKRWGRRGRGLRRHPRRSAQRSPPV), 202–241 (QEKLERQQEALRAQQAQAASTASPEGAFGNDVPPSGGQED), and 255–372 (PSLV…PLEM). 2 stretches are compositionally biased toward basic residues: residues 31–46 (PRRRRGAPVYRRRPRY) and 135–156 (PGRKKRWGRRGRGLRRHPRRSA). 2 coiled-coil regions span residues 197-224 (EDMRQQEKLERQQEALRAQQAQAASTAS) and 264-366 (DEEK…EEEN). Low complexity predominate over residues 211 to 220 (ALRAQQAQAA). A compositionally biased stretch (acidic residues) spans 275-363 (VEEEEEGERE…EGLAEDEQTE (89 aa)).

Its subcellular location is the nucleus. Its function is as follows. Regulator of histone epigenetic modifications and chromatin compaction into the sperm head, required for histone-to-protamine (HTP) transition. HTP is a key event in which somatic histones are first replaced by testis-specific histone variants, then transition proteins (TNPs) are incorporated into the spermatid nucleus, and finally protamines (PRMs) replace the TNPs to promote chromatin condensation. The protein is Coiled-coil domain-containing glutamate-rich protein 1 (CCER1) of Bos taurus (Bovine).